The sequence spans 188 residues: GMP synthase [glutamine-hydrolyzing] subunit A (188 aa).

In terms of domain architecture, Glutamine amidotransferase type-1 spans 3 to 188 (KVLVVAFGGQ…FQNFVELCKR (186 aa)). Cys-79 acts as the Nucleophile in catalysis. Catalysis depends on residues His-166 and Glu-168.

As to quaternary structure, heterodimer composed of a glutamine amidotransferase subunit (A) and a GMP-binding subunit (B).

The enzyme catalyses XMP + L-glutamine + ATP + H2O = GMP + L-glutamate + AMP + diphosphate + 2 H(+). The protein operates within purine metabolism; GMP biosynthesis; GMP from XMP (L-Gln route): step 1/1. Catalyzes the synthesis of GMP from XMP. This is GMP synthase [glutamine-hydrolyzing] subunit A from Ignicoccus hospitalis (strain KIN4/I / DSM 18386 / JCM 14125).